Here is a 1126-residue protein sequence, read N- to C-terminus: Ubiquitin carboxyl-terminal hydrolase 16/45 (1126 aa).

Residues 1–15 show a composition bias toward basic and acidic residues; it reads MVKKRQADSRDHDCS. The segment at 1–44 is disordered; the sequence is MVKKRQADSRDHDCSTDSGNEDLHHRKGLGSPGQSDGATPTTAS. A compositionally biased stretch (polar residues) spans 32-44; sequence PGQSDGATPTTAS. The UBP-type zinc-finger motif lies at 43–181; it reads ASCQHIKKAV…ELVKKLAQKP (139 aa). Zn(2+) contacts are provided by cysteine 45, histidine 47, cysteine 70, cysteine 73, cysteine 111, cysteine 114, cysteine 119, histidine 126, histidine 130, histidine 139, cysteine 152, and cysteine 155. Low complexity-rich tracts occupy residues 215 to 229 and 254 to 264; these read GGSF…SLAA and SSGLSTSDSLT. The disordered stretch occupies residues 215-264; sequence GGSFDDSSSRGSLAAAGGGGGVGSSRNRQVAIPMPPPEPSSGLSTSDSLT. Catalysis depends on cysteine 315, which acts as the Nucleophile. Disordered stretches follow at residues 513–547, 570–762, and 795–833; these read KPQP…INTK, ASLG…SGSS, and EQGA…ARTK. Positions 524–539 are enriched in low complexity; sequence PELSLTSSSSSVTPST. Over residues 586–598 the composition is skewed to basic residues; sequence QRKAKRAAKKRQK. Composition is skewed to low complexity over residues 599-614 and 646-657; these read SSLN…GNEL and TEDSTTSSVTTS. Residues 674-701 show a composition bias toward polar residues; it reads APSTNNVPSSTASLTAPSKTYMDSNGNA. Residues 705–718 show a composition bias toward basic and acidic residues; the sequence is GEKRDDTPEHMDKD. Residues 730-762 are compositionally biased toward low complexity; that stretch reads ATSPAPTATNSSTSTSATGNNNSVAGSGLSGSS. The span at 807–816 shows a compositional bias: basic and acidic residues; sequence GEAKAIEQPE. Over residues 821–830 the composition is skewed to low complexity; the sequence is QAQAMAQAQA. Histidine 984 (proton acceptor) is an active-site residue. Residues 1037–1089 form a disordered region; that stretch reads LKVLDDSDDFSNSSSNSSTSDESQTPATPLEEQQTQQAQQPQQPQQLEEAANV. Low complexity predominate over residues 1046–1086; sequence FSNSSSNSSTSDESQTPATPLEEQQTQQAQQPQQPQQLEEA.

This sequence belongs to the peptidase C19 family.

It carries out the reaction Thiol-dependent hydrolysis of ester, thioester, amide, peptide and isopeptide bonds formed by the C-terminal Gly of ubiquitin (a 76-residue protein attached to proteins as an intracellular targeting signal).. Functionally, involved in the regulation of DNA damage repair. The protein is Ubiquitin carboxyl-terminal hydrolase 16/45 of Drosophila melanogaster (Fruit fly).